The chain runs to 438 residues: Protein ROOT INITIATION DEFECTIVE 3 (438 aa).

6 WD repeats span residues 36–74, 76–115, 118–157, 171–212, 214–253, and 261–300; these read AHGL…AEVK, YPVE…LLKK, GHYR…DDFQ, EHTM…LLKN, IFPS…EYGT, and EKGK…HVRT. Positions 394-434 form a coiled coil; it reads AATEMEMERLKLEYKRSLQMNEQWQKNYENLLQVVMEEEQI.

Functionally, involved in meristem development. Acts as a negative regulator of the CUC-STM pathway in shoot apical meristem (SAM) neo-formation. In Arabidopsis thaliana (Mouse-ear cress), this protein is Protein ROOT INITIATION DEFECTIVE 3 (RID3).